Consider the following 109-residue polypeptide: Iron-sulfur cluster assembly protein CyaY (109 aa).

Belongs to the frataxin family.

Functionally, involved in iron-sulfur (Fe-S) cluster assembly. May act as a regulator of Fe-S biogenesis. This Burkholderia lata (strain ATCC 17760 / DSM 23089 / LMG 22485 / NCIMB 9086 / R18194 / 383) protein is Iron-sulfur cluster assembly protein CyaY.